Consider the following 41-residue polypeptide: Pi-stichotoxin-Hcr5b (41 aa).

Disulfide bonds link C4–C37, C6–C30, and C20–C38.

The protein belongs to the sea anemone type 3 (BDS) potassium channel toxin family.

It localises to the secreted. The protein localises to the nematocyst. Its function is as follows. Remarkably non-selective toxin, with activity on many different ion channels. Weakly and reversibly inhibits rat and human homomeric ASIC1 (isoform ASIC1a) (IC(50)=4.8 uM, and IC(50)=14.6 uM), and ASIC3 (IC(50)=15.9 uM). Molecular modeling interaction with ASIC1a suggests that this peptide hinders the collapse of acidic pockets and stabilizes nonconducting channels state. It activates several potassium channels including Kv1.1/KCNA1, Kv1.2/KCNA2, and drosophila Shaker IR. It moderately to potently inhibits potassium channels including Kv1.3/KCNA3, Kv1.4/KCNA4, Kv1.5/KCNA5, Kv1.6/KCNA6, Kv2.1/KCNB1, Kv4.2/KCND2, Kv7.1/KCNQ1, Kv7.2/Kv7.3 (KCNQ2/KCNQ3), Kv7.4/KCNQ4, hERG/KCNH2, and C.elegans QKT1. On sodium channels, it moderately to potently inhibits Nav1.1/SCN1A, Nav1.2/SCN2A, Nav1.3/SCN3A, Nav1.4/SCN4A, Nav1.5/SCN5A, Nav1.6/SCN8A, Nav1.7/SCN9A, Nav1.8/SCN10A, and B.germanica BgNav. It also moderately to potently inhibits Cav3.1/CACNA1G, Cav3.2/CACNA1H, and Cav3.3/CACNA1I. Significant shifts in the voltage-current relationship are observed on Kv and Nav, depending on the channel isoform, whereas the toxin does not seem to modulate the voltage-sensor domains of Cav channels, acting mainly as a pore blocker. Does not activate nicotinic acetylcholine receptors (nAChR), but potentiates ACh-elicited current of human alpha-7/CHRNA7 nAChR. Is also able to bind T.californica muscle-type nAChRs. In vivo, causes an excitatory effect in mice behavior. Also shows antihyperalgesic and analgesic activity in the acid-induced muscle pain mice model, and weak anti-inflammatory effect in models of acute local inflammation. The polypeptide is Pi-stichotoxin-Hcr5b (Radianthus crispa (Leathery sea anemone)).